The chain runs to 117 residues: Large ribosomal subunit protein uL18 (117 aa).

The protein belongs to the universal ribosomal protein uL18 family. Part of the 50S ribosomal subunit; part of the 5S rRNA/L5/L18/L25 subcomplex. Contacts the 5S and 23S rRNAs.

Functionally, this is one of the proteins that bind and probably mediate the attachment of the 5S RNA into the large ribosomal subunit, where it forms part of the central protuberance. In Glaesserella parasuis serovar 5 (strain SH0165) (Haemophilus parasuis), this protein is Large ribosomal subunit protein uL18.